We begin with the raw amino-acid sequence, 235 residues long: 15,16-dihydrobiliverdin:ferredoxin oxidoreductase (235 aa).

Belongs to the HY2 family.

The catalysed reaction is 15,16-dihydrobiliverdin + oxidized 2[4Fe-4S]-[ferredoxin] = biliverdin IXalpha + reduced 2[4Fe-4S]-[ferredoxin] + 2 H(+). Its function is as follows. Catalyzes the two-electron reduction of biliverdin IX-alpha at the C15 methine bridge. The polypeptide is 15,16-dihydrobiliverdin:ferredoxin oxidoreductase (Synechococcus sp. (strain CC9902)).